The primary structure comprises 222 residues: Urease accessory protein UreF (222 aa).

It belongs to the UreF family. In terms of assembly, ureD, UreF and UreG form a complex that acts as a GTP-hydrolysis-dependent molecular chaperone, activating the urease apoprotein by helping to assemble the nickel containing metallocenter of UreC. The UreE protein probably delivers the nickel.

It localises to the cytoplasm. Its function is as follows. Required for maturation of urease via the functional incorporation of the urease nickel metallocenter. The polypeptide is Urease accessory protein UreF (Hahella chejuensis (strain KCTC 2396)).